The primary structure comprises 289 residues: MRITGKTFRRRRADSESEEDEQESEEVRLKLEETREVQNLRKRPNGVSAAALLVGEKVQEETTLVDDPFQMATGGMVDMKKLKERGKDKVSEEEDLHLGTSFSAETNRRDEDADMMKYIETELKKRKGIVEQEEQKAKPKNAEDCLYELPENIRVSSAKKTEEMLSNQMLSGIPEVDLGIDAKIKNIISTEDAKARLLAEQQNKKKDSETSFVPTNMAVNYVQHNRFYHEELNAPIRRNKEEPKARPLRVGDTEKPEPERSPPNRKRPANEKATDDYHYEKFKKMNRRY.

2 disordered regions span residues 1 to 30 (MRIT…VRLK) and 85 to 111 (RGKD…RRDE). An interaction with SNRNP200 region spans residues 5 to 58 (GKTFRRRRADSESEEDEQESEEVRLKLEETREVQNLRKRPNGVSAAALLVGEKV). 2 positions are modified to phosphoserine: S15 and S17. Y147 is subject to Phosphotyrosine. The segment covering 232–283 (LNAPIRRNKEEPKARPLRVGDTEKPEPERSPPNRKRPANEKATDDYHYEKFK) has biased composition (basic and acidic residues). The disordered stretch occupies residues 232 to 289 (LNAPIRRNKEEPKARPLRVGDTEKPEPERSPPNRKRPANEKATDDYHYEKFKKMNRRY). T253 carries the phosphothreonine modification. S261 is subject to Phosphoserine.

It belongs to the TLS1 family. In terms of assembly, component of the spliceosome. Interacts with SNRNP200; the interaction is direct. Interacts with PRPF8.

Its subcellular location is the nucleus. It localises to the chromosome. The protein localises to the centromere. Functionally, plays a role in pre-mRNA splicing by promoting usage of the upstream 3'-splice site at alternative NAGNAG splice sites; these are sites featuring alternative acceptor motifs separated by only a few nucleotides. May also modulate exon inclusion events. PPlays a role in spliceosomal remodeling by displacing WBP4 from SNRNP200 and may act to inhibit SNRNP200 helicase activity. Binds U5 snRNA. Required for proper chromosome segregation. Not required for splicing of shelterin components. The polypeptide is Splicing factor C9orf78 homolog (Mus musculus (Mouse)).